An 804-amino-acid chain; its full sequence is Leucine--tRNA ligase (804 aa).

Residues 40–51 (PYPSGQGLHVGH) carry the 'HIGH' region motif. The 'KMSKS' region signature appears at 576-580 (KMSKS). K579 is an ATP binding site.

The protein belongs to the class-I aminoacyl-tRNA synthetase family.

It is found in the cytoplasm. It catalyses the reaction tRNA(Leu) + L-leucine + ATP = L-leucyl-tRNA(Leu) + AMP + diphosphate. In Enterococcus faecalis (strain ATCC 700802 / V583), this protein is Leucine--tRNA ligase.